The chain runs to 405 residues: Glucose-1-phosphate adenylyltransferase (405 aa).

Alpha-D-glucose 1-phosphate contacts are provided by residues Y96, G161, 176 to 177 (EK), and S194.

It belongs to the bacterial/plant glucose-1-phosphate adenylyltransferase family. As to quaternary structure, homotetramer.

The enzyme catalyses alpha-D-glucose 1-phosphate + ATP + H(+) = ADP-alpha-D-glucose + diphosphate. It participates in glycan biosynthesis; glycogen biosynthesis. Its function is as follows. Involved in the biosynthesis of ADP-glucose, a building block required for the elongation reactions to produce glycogen. Catalyzes the reaction between ATP and alpha-D-glucose 1-phosphate (G1P) to produce pyrophosphate and ADP-Glc. The chain is Glucose-1-phosphate adenylyltransferase from Aliivibrio fischeri (strain ATCC 700601 / ES114) (Vibrio fischeri).